A 232-amino-acid chain; its full sequence is 2,3,4,5-tetrahydropyridine-2,6-dicarboxylate N-acetyltransferase (232 aa).

The protein belongs to the transferase hexapeptide repeat family. DapH subfamily.

The enzyme catalyses (S)-2,3,4,5-tetrahydrodipicolinate + acetyl-CoA + H2O = L-2-acetamido-6-oxoheptanedioate + CoA. It functions in the pathway amino-acid biosynthesis; L-lysine biosynthesis via DAP pathway; LL-2,6-diaminopimelate from (S)-tetrahydrodipicolinate (acetylase route): step 1/3. Functionally, catalyzes the transfer of an acetyl group from acetyl-CoA to tetrahydrodipicolinate. This Streptococcus pneumoniae (strain CGSP14) protein is 2,3,4,5-tetrahydropyridine-2,6-dicarboxylate N-acetyltransferase.